The following is a 139-amino-acid chain: Small ribosomal subunit protein uS11 (139 aa).

The span at 1-13 shows a compositional bias: low complexity; it reads MAKQAAKGSAAAT. Positions 1–30 are disordered; it reads MAKQAAKGSAAATKRQRGKRREKKNVPRGQ. The segment covering 14 to 23 has biased composition (basic residues); that stretch reads KRQRGKRREK.

The protein belongs to the universal ribosomal protein uS11 family. Part of the 30S ribosomal subunit. Interacts with proteins S7 and S18. Binds to IF-3.

Located on the platform of the 30S subunit, it bridges several disparate RNA helices of the 16S rRNA. Forms part of the Shine-Dalgarno cleft in the 70S ribosome. This Roseiflexus sp. (strain RS-1) protein is Small ribosomal subunit protein uS11.